The chain runs to 64 residues: Large ribosomal subunit protein uL29 (64 aa).

This sequence belongs to the universal ribosomal protein uL29 family.

The chain is Large ribosomal subunit protein uL29 from Paraburkholderia phytofirmans (strain DSM 17436 / LMG 22146 / PsJN) (Burkholderia phytofirmans).